A 514-amino-acid chain; its full sequence is Contact site A protein (514 aa).

A signal peptide spans 1–19; sequence MKFLLVLIILYNILNSAHS. The interval 20-453 is globular; that stretch reads APTITAVSNG…EATTSTTYTI (434 aa). Residues 21 to 104 form the IPT/TIG 1 domain; the sequence is PTITAVSNGK…TGGNGLFKYT (84 aa). Residues Asn-128, Asn-137, Asn-207, Asn-294, and Asn-399 are each glycosylated (N-linked (GlcNAc...) asparagine). Residues 191 to 283 enclose the IPT/TIG 2 domain; the sequence is PTITSITPLA…NQQPITFTYN (93 aa). Low complexity-rich tracts occupy residues 446 to 475 and 483 to 494; these read TTST…TATP and STPEETEAPSSA. The segment at 446–494 is disordered; sequence TTSTTYTIPDTPTPTDTATPSPTPTETATPSPTPKPTSTPEETEAPSSA. A run of 2 repeats spans residues 462-469 and 472-479. The 2 X 8 AA repeats, Pro-rich stretch occupies residues 462–479; it reads TATPSPTPTETATPSPTP. Residue Ser-492 is the site of GPI-like-anchor amidated serine attachment. Residues 493–514 constitute a propeptide, removed in mature form; the sequence is SATTLISPLSLIVIFISFVLLI.

Post-translationally, phosphorylated on serine and N-glycosylated with two types of oligosaccharide chains. In terms of processing, the GPI-like-anchor contains a phosphoceramide group, rather than a phosphatidyl group.

The protein localises to the cell membrane. In terms of biological role, this cell-surface glycoprotein mediates cell-cell binding via homophilic interaction. The sequence is that of Contact site A protein (csaA) from Dictyostelium discoideum (Social amoeba).